An 89-amino-acid chain; its full sequence is Small ribosomal subunit protein uS15 (89 aa).

A disordered region spans residues 1-23 (MTLNTEAKQKIINKHQTHGTDTG).

This sequence belongs to the universal ribosomal protein uS15 family. Part of the 30S ribosomal subunit. Forms a bridge to the 50S subunit in the 70S ribosome, contacting the 23S rRNA.

Its function is as follows. One of the primary rRNA binding proteins, it binds directly to 16S rRNA where it helps nucleate assembly of the platform of the 30S subunit by binding and bridging several RNA helices of the 16S rRNA. Functionally, forms an intersubunit bridge (bridge B4) with the 23S rRNA of the 50S subunit in the ribosome. The sequence is that of Small ribosomal subunit protein uS15 from Prochlorococcus marinus (strain SARG / CCMP1375 / SS120).